We begin with the raw amino-acid sequence, 507 residues long: Dolichyl pyrophosphate Man9GlcNAc2 alpha-1,3-glucosyltransferase (507 aa).

At 1–2 (ME) the chain is on the cytoplasmic side. The helical transmembrane segment at 3–23 (SWTWMTVVVLLGLTVRWTVSL) threads the bilayer. At 24–114 (NSYSGAGKPP…SQAHKLFMRT (91 aa)) the chain is on the lumenal side. N-linked (GlcNAc...) asparagine glycosylation is present at N59. Residues 115–135 (TVLAADLLIYIPAVLLYCYSL) traverse the membrane as a helical segment. The Cytoplasmic segment spans residues 136–143 (KEISPKRK). The chain crosses the membrane as a helical span at residues 144 to 164 (IASALCILLYPGLILIDYGHF). Topologically, residues 165 to 172 (QYNSVSLG) are lumenal. The chain crosses the membrane as a helical span at residues 173–193 (FALWGVLGVSCDWDLLGSLAF). Over 194–229 (CLALNYKQMELYHSLPFFCFLLGKCFKKGLRGKGSA) the chain is Cytoplasmic. The chain crosses the membrane as a helical span at residues 230-250 (LFIRIACTVVASFLLCWLPFL). Residues 251 to 297 (TEREHALQVVRRLFPVDRGLFEDKVANIWCSLNVFLKIKDILPRHIQ) are Lumenal-facing. A helical membrane pass occupies residues 298–318 (IAISFCFTFLSLLPACIKLTV). Over 319–332 (QPSAKGFRFTLVSC) the chain is Cytoplasmic. Residues 333–353 (ALSFFLFSFQVHEKSILLVSL) traverse the membrane as a helical segment. Topologically, residues 354–361 (PVCLVLTE) are lumenal. Residues 362–382 (IPFMSTWFLLVSTFSMLPLLL) form a helical membrane-spanning segment. The Cytoplasmic portion of the chain corresponds to 383 to 385 (KDQ). Residues 386–406 (LLLPSVVTVMAFLIACSTFFP) traverse the membrane as a helical segment. Residues 407-437 (MFENTSEEQLQLKSFAVSVRRHLPGFTFLPR) are Lumenal-facing. Residues 438–458 (IIQCLFLSSVITMILLTILSV) traverse the membrane as a helical segment. Over 459-468 (TLDPPQKLPD) the chain is Cytoplasmic. Residues 469 to 489 (LFSVLICFVSCVNFVFFLVYF) form a helical membrane-spanning segment. Over 490-507 (NIVIMWDSKNGRNRKKID) the chain is Lumenal.

The protein belongs to the ALG6/ALG8 glucosyltransferase family.

It is found in the endoplasmic reticulum membrane. It carries out the reaction an alpha-D-Man-(1-&gt;2)-alpha-D-Man-(1-&gt;2)-alpha-D-Man-(1-&gt;3)-[alpha-D-Man-(1-&gt;2)-alpha-D-Man-(1-&gt;3)-[alpha-D-Man-(1-&gt;2)-alpha-D-Man-(1-&gt;6)]-alpha-D-Man-(1-&gt;6)]-beta-D-Man-(1-&gt;4)-beta-D-GlcNAc-(1-&gt;4)-alpha-D-GlcNAc-diphospho-di-trans,poly-cis-dolichol + a di-trans,poly-cis-dolichyl beta-D-glucosyl phosphate = an alpha-D-Glc-(1-&gt;3)-alpha-D-Man-(1-&gt;2)-alpha-D-Man-(1-&gt;2)-alpha-D-Man-(1-&gt;3)-[alpha-D-Man-(1-&gt;2)-alpha-D-Man-(1-&gt;3)-[alpha-D-Man-(1-&gt;2)-alpha-D-Man-(1-&gt;6)]-alpha-D-Man-(1-&gt;6)]-beta-D-Man-(1-&gt;4)-beta-D-GlcNAc-(1-&gt;4)-alpha-D-GlcNAc-diphospho-di-trans,poly-cis-dolichol + a di-trans,poly-cis-dolichyl phosphate + H(+). It functions in the pathway protein modification; protein glycosylation. Its function is as follows. Dolichyl pyrophosphate Man9GlcNAc2 alpha-1,3-glucosyltransferase that operates in the biosynthetic pathway of dolichol-linked oligosaccharides, the glycan precursors employed in protein asparagine (N)-glycosylation. The assembly of dolichol-linked oligosaccharides begins on the cytosolic side of the endoplasmic reticulum membrane and finishes in its lumen. The sequential addition of sugars to dolichol pyrophosphate produces dolichol-linked oligosaccharides containing fourteen sugars, including two GlcNAcs, nine mannoses and three glucoses. Once assembled, the oligosaccharide is transferred from the lipid to nascent proteins by oligosaccharyltransferases. In the lumen of the endoplasmic reticulum, adds the first glucose residue from dolichyl phosphate glucose (Dol-P-Glc) onto the lipid-linked oligosaccharide intermediate Man(9)GlcNAc(2)-PP-Dol to produce Glc(1)Man(9)GlcNAc(2)-PP-Dol. Glc(1)Man(9)GlcNAc(2)-PP-Dol is a substrate for ALG8, the following enzyme in the biosynthetic pathway. The polypeptide is Dolichyl pyrophosphate Man9GlcNAc2 alpha-1,3-glucosyltransferase (Rattus norvegicus (Rat)).